A 358-amino-acid polypeptide reads, in one-letter code: Peptide chain release factor 1 (358 aa).

Glutamine 237 is subject to N5-methylglutamine.

The protein belongs to the prokaryotic/mitochondrial release factor family. Post-translationally, methylated by PrmC. Methylation increases the termination efficiency of RF1.

Its subcellular location is the cytoplasm. In terms of biological role, peptide chain release factor 1 directs the termination of translation in response to the peptide chain termination codons UAG and UAA. This chain is Peptide chain release factor 1, found in Mycoplasma mobile (strain ATCC 43663 / 163K / NCTC 11711) (Mesomycoplasma mobile).